A 249-amino-acid polypeptide reads, in one-letter code: Triosephosphate isomerase (249 aa).

Residues asparagine 12 and lysine 14 each coordinate substrate. Lysine 14 is modified (N6-acetyllysine). Tyrosine 68 carries the 3'-nitrotyrosine modification. Serine 80 is modified (phosphoserine). The active-site Electrophile is the histidine 96. Residue serine 106 is modified to Phosphoserine. Lysine 142 is covalently cross-linked (Glycyl lysine isopeptide (Lys-Gly) (interchain with G-Cter in SUMO1)). Lysine 149 is modified (N6-succinyllysine). Residue lysine 156 is modified to N6-acetyllysine; alternate. N6-succinyllysine; alternate is present on lysine 156. Serine 159 carries the phosphoserine modification. Catalysis depends on glutamate 166, which acts as the Proton acceptor. Threonine 173 bears the Phosphothreonine mark. Lysine 194 is subject to N6-acetyllysine; alternate. Lysine 194 is subject to N6-succinyllysine; alternate. An N6-methyllysine; alternate modification is found at lysine 194. Residue serine 198 is modified to Phosphoserine. Residue tyrosine 209 is modified to 3'-nitrotyrosine. The residue at position 212 (serine 212) is a Phosphoserine. A Phosphothreonine modification is found at threonine 214. A Phosphoserine modification is found at serine 223. Residue lysine 238 is modified to N6-acetyllysine.

It belongs to the triosephosphate isomerase family. Homodimer.

The protein localises to the cytoplasm. It carries out the reaction dihydroxyacetone phosphate = methylglyoxal + phosphate. It catalyses the reaction D-glyceraldehyde 3-phosphate = dihydroxyacetone phosphate. Its pathway is carbohydrate degradation; glycolysis; D-glyceraldehyde 3-phosphate from glycerone phosphate: step 1/1. It functions in the pathway carbohydrate biosynthesis; gluconeogenesis. In terms of biological role, triosephosphate isomerase is an extremely efficient metabolic enzyme that catalyzes the interconversion between dihydroxyacetone phosphate (DHAP) and D-glyceraldehyde-3-phosphate (G3P) in glycolysis and gluconeogenesis. Functionally, it is also responsible for the non-negligible production of methylglyoxal a reactive cytotoxic side-product that modifies and can alter proteins, DNA and lipids. The sequence is that of Triosephosphate isomerase (TPI1) from Gorilla gorilla gorilla (Western lowland gorilla).